Here is a 379-residue protein sequence, read N- to C-terminus: Protein RecA (379 aa).

Position 79-86 (79-86 (GPESSGKT)) interacts with ATP.

Belongs to the RecA family.

Its subcellular location is the cytoplasm. In terms of biological role, can catalyze the hydrolysis of ATP in the presence of single-stranded DNA, the ATP-dependent uptake of single-stranded DNA by duplex DNA, and the ATP-dependent hybridization of homologous single-stranded DNAs. It interacts with LexA causing its activation and leading to its autocatalytic cleavage. The polypeptide is Protein RecA (Streptococcus uberis (strain ATCC BAA-854 / 0140J)).